A 290-amino-acid polypeptide reads, in one-letter code: Elongation factor Ts (290 aa).

The tract at residues Thr-80–Val-83 is involved in Mg(2+) ion dislocation from EF-Tu.

Belongs to the EF-Ts family.

It localises to the cytoplasm. In terms of biological role, associates with the EF-Tu.GDP complex and induces the exchange of GDP to GTP. It remains bound to the aminoacyl-tRNA.EF-Tu.GTP complex up to the GTP hydrolysis stage on the ribosome. This Neorickettsia sennetsu (strain ATCC VR-367 / Miyayama) (Ehrlichia sennetsu) protein is Elongation factor Ts.